Here is a 417-residue protein sequence, read N- to C-terminus: Serine--tRNA ligase (417 aa).

232 to 234 (TAE) lines the L-serine pocket. Residue 263-265 (RKE) coordinates ATP. Residue glutamate 286 coordinates L-serine. 350–353 (EISS) contributes to the ATP binding site. L-serine is bound at residue serine 385.

The protein belongs to the class-II aminoacyl-tRNA synthetase family. Type-1 seryl-tRNA synthetase subfamily. In terms of assembly, homodimer. The tRNA molecule binds across the dimer.

The protein resides in the cytoplasm. It catalyses the reaction tRNA(Ser) + L-serine + ATP = L-seryl-tRNA(Ser) + AMP + diphosphate + H(+). The enzyme catalyses tRNA(Sec) + L-serine + ATP = L-seryl-tRNA(Sec) + AMP + diphosphate + H(+). It participates in aminoacyl-tRNA biosynthesis; selenocysteinyl-tRNA(Sec) biosynthesis; L-seryl-tRNA(Sec) from L-serine and tRNA(Sec): step 1/1. Catalyzes the attachment of serine to tRNA(Ser). Is also able to aminoacylate tRNA(Sec) with serine, to form the misacylated tRNA L-seryl-tRNA(Sec), which will be further converted into selenocysteinyl-tRNA(Sec). This chain is Serine--tRNA ligase, found in Sulfurihydrogenibium sp. (strain YO3AOP1).